Reading from the N-terminus, the 216-residue chain is Somatotropin (216 aa).

The signal sequence occupies residues methionine 1–threonine 26. Histidine 45 contacts Zn(2+). Cysteine 78 and cysteine 189 form a disulfide bridge. At serine 131 the chain carries Phosphoserine. Glutamate 198 provides a ligand contact to Zn(2+). Cysteines 206 and 214 form a disulfide.

The protein belongs to the somatotropin/prolactin family.

Its subcellular location is the secreted. Functionally, plays an important role in growth control. Its major role in stimulating body growth is to stimulate the liver and other tissues to secrete IGF1. It stimulates both the differentiation and proliferation of myoblasts. It also stimulates amino acid uptake and protein synthesis in muscle and other tissues. The chain is Somatotropin (GH1) from Felis catus (Cat).